A 59-amino-acid chain; its full sequence is Potassium channel toxin alpha-KTx 4.1 (59 aa).

Residues 1–22 (MKAFYGILIIFILISMIDLSKQ) form the signal peptide. Cystine bridges form between cysteine 29–cysteine 50, cysteine 35–cysteine 55, and cysteine 39–cysteine 57. An interaction with Ca(2+)-activated K(+) channels region spans residues 48–55 (GKCMNGKC).

It belongs to the short scorpion toxin superfamily. Potassium channel inhibitor family. Alpha-KTx 04 subfamily. As to expression, expressed by the venom gland.

Its subcellular location is the secreted. Potently blocks Kv1.1/KCNA1 (85%), Kv1.2/KCNA2 (91%), Kv1.3/KCNA3 (89%), Kv1.6/KCNA6 (94%), and Shaker (97%). The chain is Potassium channel toxin alpha-KTx 4.1 from Tityus serrulatus (Brazilian scorpion).